A 570-amino-acid chain; its full sequence is Protein HEATR9 (570 aa).

In Homo sapiens (Human), this protein is Protein HEATR9 (HEATR9).